A 475-amino-acid chain; its full sequence is ATP synthase subunit beta, chloroplastic (475 aa).

155–162 contributes to the ATP binding site; that stretch reads GGAGVGKT.

Belongs to the ATPase alpha/beta chains family. In terms of assembly, F-type ATPases have 2 components, CF(1) - the catalytic core - and CF(0) - the membrane proton channel. CF(1) has five subunits: alpha(3), beta(3), gamma(1), delta(1), epsilon(1). CF(0) has four main subunits: a(1), b(1), b'(1) and c(9-12).

Its subcellular location is the plastid. The protein localises to the chloroplast thylakoid membrane. The catalysed reaction is ATP + H2O + 4 H(+)(in) = ADP + phosphate + 5 H(+)(out). Functionally, produces ATP from ADP in the presence of a proton gradient across the membrane. The catalytic sites are hosted primarily by the beta subunits. In Porphyra purpurea (Red seaweed), this protein is ATP synthase subunit beta, chloroplastic.